We begin with the raw amino-acid sequence, 244 residues long: Sperm-egg fusion protein Juno (244 aa).

Residues 1–19 (MAQWWQILLGLWAVLPTLA) form the signal peptide. 8 cysteine pairs are disulfide-bonded: cysteine 27-cysteine 55, cysteine 47-cysteine 95, cysteine 56-cysteine 99, cysteine 79-cysteine 166, cysteine 86-cysteine 137, cysteine 126-cysteine 200, cysteine 130-cysteine 180, and cysteine 143-cysteine 160. The interval 62–81 (WEAHLEEPLLFNFSMMHCGL) is important for interaction with IZUMO1. Asparagine 73 carries an N-linked (GlcNAc...) asparagine glycan. Asparagine 185 carries N-linked (GlcNAc...) asparagine glycosylation. Glycine 222 carries GPI-anchor amidated glycine lipidation. Positions 223–244 (SALAPQLSYTLPAFSLCLLFHP) are excised as a propeptide.

It belongs to the folate receptor family. In terms of assembly, monomer. Interacts with IZUMO1; the interaction is direct. IZUMO1 and IZUMO1R/JUNO form a complex with 1:1 stoichiometry. Interacts with WDR54. The protein is rapidly cleaved following fertilization, being only weakly detectable in zona-intact fertilized eggs at telophase II and undetectable at the pronuclear stage. Sheding is probably required to block to polyspermy and ensuring egg fusion with a single sperm. Widely expressed with higher expression in thymus, spleen and lung. Present at the cell surface of unfertilized oocytes, while it is barely detectable 30 to 40 minutes after fertilization (at protein level).

The protein localises to the cell membrane. Functionally, receptor for IZUMO1 present at the cell surface of oocytes (oolemma), which is essential for species-specific gamete recognition and fertilization. The IZUMO1:IZUMO1R/JUNO interaction is a necessary adhesion event between sperm and egg that is required for fertilization but is not sufficient for cell fusion. The ligand-receptor interaction probably does not act as a membrane 'fusogen'. Does not bind folate. This Mus musculus (Mouse) protein is Sperm-egg fusion protein Juno.